The following is a 1033-amino-acid chain: Lethal(2) giant larvae protein homolog SRO7 (1033 aa).

Residues 16–45 (SLKGQNSETPIENSKASFKSKNSKTSTISK) are disordered. The span at 18–27 (KGQNSETPIE) shows a compositional bias: polar residues. Over residues 28-45 (NSKASFKSKNSKTSTISK) the composition is skewed to low complexity. WD repeat units lie at residues 81–114 (IAAAFDFTQNLLAIATVTGEVHIYGQQQVEVVIK), 121–156 (IKEMRFVKGIYLVVINAKDTVYVLSLYSQKVLTTVF), 161–197 (ITSIDTDASLDWMLIGLQNGSMIVYDIDRDQLSSFKL), 216–249 (SIQWNPRDIGTVLISYEYVTLTYSLVENEIKQSF), 274–309 (VIQSLYHPNSLHIITIHEDNSLVFWDANSGHMIMAR), 333–397 (KISK…MKIF), 405–440 (IVNILPIPRQSPYFAGCHNPGLILLILGNGEIETML), 464–538 (ATTS…FEVN), 552–631 (DKIS…STAV), 638–673 (TSAINNSNIGFVGIAYAAGSLMLIDRRGPAIIYMEN), 685–736 (VTCI…DITN), 745–799 (KIDA…THKG), 804–851 (LAAT…MSEH), and 865–888 (SVLRNGDIAIRVSEFQASLFSTVK). Phosphoserine is present on residues serine 591 and serine 602. The segment at 953 to 984 (SFSERSSDDNNANHPEHQYTKPTRKGRNSSYG) is disordered.

This sequence belongs to the WD repeat L(2)GL family. Interacts with MYO2 and SEC9.

It is found in the cytoplasm. The protein localises to the cell membrane. Acts as an allosteric regulator of polarized exocytosis by promoting the targeted fusion of vesicles with the plasma membrane. Coordinates the spatial and temporal nature of both Rab-dependent tethering and SNARE-dependent membrane fusion of exocytic vesicles with the plasma membrane. Required for targeting of the sodium pumping ATPase ENA1 to the Cell Surface, thus being involved in maintenance of ion homeostasis in cells exposed to NaCl stress. May be involved in the targeting of the myosin proteins to their intrinsic pathways. Multicopy suppressor of RHO3. May also participate in the maintenance of cell polarity and bud growth. This is Lethal(2) giant larvae protein homolog SRO7 (SRO7) from Saccharomyces cerevisiae (strain ATCC 204508 / S288c) (Baker's yeast).